The primary structure comprises 129 residues: uncharacterized protein (129 aa).

This is an uncharacterized protein from Sinorhizobium fredii (strain NBRC 101917 / NGR234).